A 161-amino-acid chain; its full sequence is Regulatory protein RecX (161 aa).

Belongs to the RecX family.

The protein localises to the cytoplasm. Modulates RecA activity. The protein is Regulatory protein RecX of Thermotoga petrophila (strain ATCC BAA-488 / DSM 13995 / JCM 10881 / RKU-1).